The sequence spans 222 residues: Large ribosomal subunit protein mL64 (222 aa).

Disordered stretches follow at residues 21–47 (RSRS…NLLT) and 186–222 (QRKR…EPSS). Residues 98–207 (TMQESLRLQQ…KKEARIAAMA (110 aa)) adopt a coiled-coil conformation. A Nuclear localization signal motif is present at residues 184–200 (KQQRKRLKEERQRQKKE). Positions 186 to 202 (QRKRLKEERQRQKKEAR) are enriched in basic and acidic residues. The segment covering 203-215 (IAAMASAEAQDSA) has biased composition (low complexity).

The protein belongs to the mitochondrion-specific ribosomal protein mL64 family. In terms of assembly, component of the mitochondrial ribosome large subunit (39S) which comprises a 16S rRNA and about 50 distinct proteins. Interacts with GADD45A, GADD45B and GADD45G. Interacts with NR4A1 via the NR4A1 AB domain. Interacts with ATAD3A and ATAD3B.

The protein localises to the mitochondrion. The protein resides in the nucleus. Its function is as follows. Acts as a negative regulator of G1 to S cell cycle phase progression by inhibiting cyclin-dependent kinases. Inhibitory effects are additive with GADD45 proteins but also occur in the absence of GADD45 proteins. Acts as a repressor of the orphan nuclear receptor NR4A1 by inhibiting AB domain-mediated transcriptional activity. May be involved in the hormone-mediated regulation of NR4A1 transcriptional activity. May play a role in mitochondrial protein synthesis. The sequence is that of Large ribosomal subunit protein mL64 (Gadd45gip1) from Mus musculus (Mouse).